The following is a 202-amino-acid chain: Holliday junction branch migration complex subunit RuvA (202 aa).

The interval 1–65 (MIGYLEGRVV…EDALELFGFA (65 aa)) is domain I. The domain II stretch occupies residues 66–144 (SLDDRETFRT…GRAPAAGLAP (79 aa)). The tract at residues 145–155 (SVPIPGGVAGD) is flexible linker. The tract at residues 155 to 202 (DVVAGLTNLGYPEPEARQVAAEVLEAEPDLDVAAALRQALKRLASAKK) is domain III.

Belongs to the RuvA family. As to quaternary structure, homotetramer. Forms an RuvA(8)-RuvB(12)-Holliday junction (HJ) complex. HJ DNA is sandwiched between 2 RuvA tetramers; dsDNA enters through RuvA and exits via RuvB. An RuvB hexamer assembles on each DNA strand where it exits the tetramer. Each RuvB hexamer is contacted by two RuvA subunits (via domain III) on 2 adjacent RuvB subunits; this complex drives branch migration. In the full resolvosome a probable DNA-RuvA(4)-RuvB(12)-RuvC(2) complex forms which resolves the HJ.

It localises to the cytoplasm. Its function is as follows. The RuvA-RuvB-RuvC complex processes Holliday junction (HJ) DNA during genetic recombination and DNA repair, while the RuvA-RuvB complex plays an important role in the rescue of blocked DNA replication forks via replication fork reversal (RFR). RuvA specifically binds to HJ cruciform DNA, conferring on it an open structure. The RuvB hexamer acts as an ATP-dependent pump, pulling dsDNA into and through the RuvAB complex. HJ branch migration allows RuvC to scan DNA until it finds its consensus sequence, where it cleaves and resolves the cruciform DNA. In Solidesulfovibrio magneticus (strain ATCC 700980 / DSM 13731 / RS-1) (Desulfovibrio magneticus), this protein is Holliday junction branch migration complex subunit RuvA.